A 365-amino-acid polypeptide reads, in one-letter code: D-alanine--D-alanine ligase (365 aa).

Residues 156 to 360 (KKLMAAEGLP…YAQLLDNLIE (205 aa)) enclose the ATP-grasp domain. Residue 183–238 (KRELGLPVFVKPARGGSSIGISRVADWSEWDAALSLAREHDSKVIVEAEIVGVEVE) participates in ATP binding. Residues Asp-315, Glu-327, and Asn-329 each coordinate Mg(2+).

Belongs to the D-alanine--D-alanine ligase family. The cofactor is Mg(2+). Requires Mn(2+) as cofactor.

The protein resides in the cytoplasm. It carries out the reaction 2 D-alanine + ATP = D-alanyl-D-alanine + ADP + phosphate + H(+). The protein operates within cell wall biogenesis; peptidoglycan biosynthesis. In terms of biological role, cell wall formation. This is D-alanine--D-alanine ligase from Corynebacterium diphtheriae (strain ATCC 700971 / NCTC 13129 / Biotype gravis).